The primary structure comprises 529 residues: Bifunctional purine biosynthesis protein PurH (529 aa).

Residues 2 to 149 (TNLVPVGRAL…KNHRFVNVVT (148 aa)) form the MGS-like domain.

The protein belongs to the PurH family.

It carries out the reaction (6R)-10-formyltetrahydrofolate + 5-amino-1-(5-phospho-beta-D-ribosyl)imidazole-4-carboxamide = 5-formamido-1-(5-phospho-D-ribosyl)imidazole-4-carboxamide + (6S)-5,6,7,8-tetrahydrofolate. The enzyme catalyses IMP + H2O = 5-formamido-1-(5-phospho-D-ribosyl)imidazole-4-carboxamide. Its pathway is purine metabolism; IMP biosynthesis via de novo pathway; 5-formamido-1-(5-phospho-D-ribosyl)imidazole-4-carboxamide from 5-amino-1-(5-phospho-D-ribosyl)imidazole-4-carboxamide (10-formyl THF route): step 1/1. It functions in the pathway purine metabolism; IMP biosynthesis via de novo pathway; IMP from 5-formamido-1-(5-phospho-D-ribosyl)imidazole-4-carboxamide: step 1/1. This chain is Bifunctional purine biosynthesis protein PurH, found in Cereibacter sphaeroides (strain ATCC 17025 / ATH 2.4.3) (Rhodobacter sphaeroides).